Reading from the N-terminus, the 252-residue chain is Carbohydrate deacetylase (252 aa).

Mg(2+)-binding residues include His-59 and His-122.

Belongs to the YdjC deacetylase family. In terms of assembly, homodimer. Mg(2+) is required as a cofactor.

Probably catalyzes the deacetylation of acetylated carbohydrates an important step in the degradation of oligosaccharides. This chain is Carbohydrate deacetylase, found in Vibrio cholerae serotype O1 (strain ATCC 39315 / El Tor Inaba N16961).